We begin with the raw amino-acid sequence, 28 residues long: Morintide mO6 (28 aa).

The 28-residue stretch at 1-28 folds into the Chitin-binding type-1 domain; sequence NGLCCSQYGFCGTTSAYCSRANGCQSNC. Cystine bridges form between Cys4–Cys18 and Cys24–Cys28.

Seeds (at protein level).

Functionally, chitin-binding protein which functions in defense against chitin-containing fungal pathogens. The protein is Morintide mO6 of Moringa oleifera (Horseradish tree).